Here is a 396-residue protein sequence, read N- to C-terminus: Phosphoglycerate kinase (396 aa).

Substrate contacts are provided by residues 21–23, Arg36, 59–62, Arg119, and Arg156; these read DFN and HLGK. Residues Lys206, Gly294, Glu325, and 352–355 contribute to the ATP site; that span reads GGDS.

The protein belongs to the phosphoglycerate kinase family. In terms of assembly, monomer.

The protein resides in the cytoplasm. It catalyses the reaction (2R)-3-phosphoglycerate + ATP = (2R)-3-phospho-glyceroyl phosphate + ADP. The protein operates within carbohydrate degradation; glycolysis; pyruvate from D-glyceraldehyde 3-phosphate: step 2/5. In Listeria innocua serovar 6a (strain ATCC BAA-680 / CLIP 11262), this protein is Phosphoglycerate kinase.